Consider the following 207-residue polypeptide: Nuclear transcription factor Y subunit beta (207 aa).

The interval 1–52 (MTMDGDSSTTDASQLGISADYIGGSHYVIQPHDDTEDSMNDHEDTNGSKESF) is a domain. The segment at 27–52 (YVIQPHDDTEDSMNDHEDTNGSKESF) is disordered. Residues 39 to 52 (MNDHEDTNGSKESF) show a composition bias toward basic and acidic residues. The interval 53–142 (REQDIYLPIA…PLKLYLQKFR (90 aa)) is b domain. A DNA-binding region spans residues 59-65 (LPIANVA). The subunit association domain (SAD) stretch occupies residues 86 to 97 (VQECVSEFISFI). A Glycyl lysine isopeptide (Lys-Gly) (interchain with G-Cter in ubiquitin) cross-link involves residue lysine 140. The c domain stretch occupies residues 143 to 207 (EAMKGEKGIG…ISGVQQIQFS (65 aa)).

It belongs to the NFYB/HAP3 subunit family. As to quaternary structure, heterotrimeric transcription factor composed of three components, NF-YA, NF-YB and NF-YC. NF-YB and NF-YC must interact and dimerize for NF-YA association and DNA binding. Interacts with C1QBP. Post-translationally, monoubiquitination at Lys-140 plays an important role in transcriptional activation by allowing the deposition of histone H3 methylations as well as histone H2B monoubiquitination at 'Lys-121'.

Its subcellular location is the nucleus. Component of the sequence-specific heterotrimeric transcription factor (NF-Y) which specifically recognizes a 5'-CCAAT-3' box motif found in the promoters of its target genes. NF-Y can function as both an activator and a repressor, depending on its interacting cofactors. The polypeptide is Nuclear transcription factor Y subunit beta (NFYB) (Bos taurus (Bovine)).